We begin with the raw amino-acid sequence, 873 residues long: Alanine--tRNA ligase (873 aa).

His557, His561, Cys659, and His663 together coordinate Zn(2+).

This sequence belongs to the class-II aminoacyl-tRNA synthetase family. The cofactor is Zn(2+).

The protein localises to the cytoplasm. It catalyses the reaction tRNA(Ala) + L-alanine + ATP = L-alanyl-tRNA(Ala) + AMP + diphosphate. Functionally, catalyzes the attachment of alanine to tRNA(Ala) in a two-step reaction: alanine is first activated by ATP to form Ala-AMP and then transferred to the acceptor end of tRNA(Ala). Also edits incorrectly charged Ser-tRNA(Ala) and Gly-tRNA(Ala) via its editing domain. The chain is Alanine--tRNA ligase from Nitrosococcus oceani (strain ATCC 19707 / BCRC 17464 / JCM 30415 / NCIMB 11848 / C-107).